The sequence spans 282 residues: Pantothenate synthetase (282 aa).

Position 30–37 (30–37 (MGNLHLGH)) interacts with ATP. Catalysis depends on His37, which acts as the Proton donor. Residue Gln61 participates in (R)-pantoate binding. Gln61 lines the beta-alanine pocket. An ATP-binding site is contributed by 149 to 152 (GQKD). A (R)-pantoate-binding site is contributed by Gln155. ATP is bound by residues Ile178 and 186–189 (MSSR).

The protein belongs to the pantothenate synthetase family. As to quaternary structure, homodimer.

The protein resides in the cytoplasm. The catalysed reaction is (R)-pantoate + beta-alanine + ATP = (R)-pantothenate + AMP + diphosphate + H(+). It participates in cofactor biosynthesis; (R)-pantothenate biosynthesis; (R)-pantothenate from (R)-pantoate and beta-alanine: step 1/1. Catalyzes the condensation of pantoate with beta-alanine in an ATP-dependent reaction via a pantoyl-adenylate intermediate. This Shewanella piezotolerans (strain WP3 / JCM 13877) protein is Pantothenate synthetase.